An 81-amino-acid chain; its full sequence is Small ribosomal subunit protein bS18 (81 aa).

The protein belongs to the bacterial ribosomal protein bS18 family. As to quaternary structure, part of the 30S ribosomal subunit. Forms a tight heterodimer with protein bS6.

Binds as a heterodimer with protein bS6 to the central domain of the 16S rRNA, where it helps stabilize the platform of the 30S subunit. This Chloroflexus aurantiacus (strain ATCC 29366 / DSM 635 / J-10-fl) protein is Small ribosomal subunit protein bS18.